A 275-amino-acid polypeptide reads, in one-letter code: NH(3)-dependent NAD(+) synthetase (275 aa).

47–54 (GISGGQDS) provides a ligand contact to ATP. Asp53 contributes to the Mg(2+) binding site. Arg139 is a deamido-NAD(+) binding site. Thr159 is an ATP binding site. Glu164 serves as a coordination point for Mg(2+). The deamido-NAD(+) site is built by Lys172 and Asp179. Residues Lys188 and Thr210 each contribute to the ATP site. Position 259–260 (259–260 (HK)) interacts with deamido-NAD(+).

The protein belongs to the NAD synthetase family. As to quaternary structure, homodimer.

The catalysed reaction is deamido-NAD(+) + NH4(+) + ATP = AMP + diphosphate + NAD(+) + H(+). It functions in the pathway cofactor biosynthesis; NAD(+) biosynthesis; NAD(+) from deamido-NAD(+) (ammonia route): step 1/1. In terms of biological role, catalyzes the ATP-dependent amidation of deamido-NAD to form NAD. Uses ammonia as a nitrogen source. The protein is NH(3)-dependent NAD(+) synthetase of Staphylococcus epidermidis (strain ATCC 35984 / DSM 28319 / BCRC 17069 / CCUG 31568 / BM 3577 / RP62A).